A 375-amino-acid chain; its full sequence is Actin, cytoplasmic (375 aa).

The protein belongs to the actin family.

The protein localises to the cytoplasm. Its subcellular location is the cytoskeleton. The catalysed reaction is ATP + H2O = ADP + phosphate + H(+). In terms of biological role, actins are highly conserved proteins that are involved in various types of cell motility and are ubiquitously expressed in all eukaryotic cells. The polypeptide is Actin, cytoplasmic (Oxytricha trifallax (Sterkiella histriomuscorum)).